We begin with the raw amino-acid sequence, 74 residues long: ATP synthase subunit 9, mitochondrial (74 aa).

2 helical membrane-spanning segments follow: residues 8-28 and 50-70; these read MGAG…GNVF and ILGF…AFLI.

Belongs to the ATPase C chain family. F-type ATPases have 2 components, CF(1) - the catalytic core - and CF(0) - the membrane proton channel. CF(1) has five subunits: alpha(3), beta(3), gamma(1), delta(1), epsilon(1). CF(0) has three main subunits: a, b and c.

The protein localises to the mitochondrion membrane. In terms of biological role, this protein is one of the chains of the nonenzymatic membrane component (F0) of mitochondrial ATPase. The polypeptide is ATP synthase subunit 9, mitochondrial (ATP9) (Solanum lycopersicum (Tomato)).